The primary structure comprises 284 residues: Ermin (284 aa).

Residues 1-61 (MTDVPATFTQ…APTKGSQEER (61 aa)) are disordered. Phosphoserine is present on serine 73. The interval 108-251 (TFREGRQWEK…PTLGKKSDIS (144 aa)) is disordered. Basic and acidic residues-rich tracts occupy residues 126–140 (EIRRQKERITEQPLK) and 171–183 (LHSKHDEEQKVWD). A compositionally biased stretch (acidic residues) spans 184–200 (EEIDDDDDDNCNDDEDE). The span at 201–220 (VRVIEFKKKHEEVSQFKEEG) shows a compositional bias: basic and acidic residues. Residues serine 214, serine 226, serine 230, and serine 233 each carry the phosphoserine modification. Over residues 225 to 235 (DSPLSSASSQA) the composition is skewed to low complexity. The residue at position 237 (threonine 237) is a Phosphothreonine. The segment at 265-284 (KIRKGNTKQRIDEFESMMHL) is binds actin.

As to quaternary structure, binds actin.

It is found in the cytoplasm. Its subcellular location is the cytoskeleton. In terms of biological role, plays a role in cytoskeletal rearrangements during the late wrapping and/or compaction phases of myelinogenesis as well as in maintenance and stability of myelin sheath in the adult. May play an important role in late-stage oligodendroglia maturation, myelin/Ranvier node formation during CNS development, and in the maintenance and plasticity of related structures in the mature CNS. This is Ermin (ERMN) from Pongo abelii (Sumatran orangutan).